A 538-amino-acid polypeptide reads, in one-letter code: Guanine nucleotide-binding protein-like 3 (538 aa).

The span at 1 to 45 shows a compositional bias: basic residues; it reads MKRPKLKKASKRMTCHKRYKIQKKVREHHRKLRKEAKKRGHKKPR. 2 disordered regions span residues 1–57 and 69–126; these read MKRP…APFK and QQLE…NPKK. A basic region spans residues 2–46; sequence KRPKLKKASKRMTCHKRYKIQKKVREHHRKLRKEAKKRGHKKPRK. A coiled-coil region spans residues 54 to 95; sequence APFKEALLREAELRKQQLEELKQQQKLDRQKEQERKRKLEVS. Residues 69–93 show a composition bias toward basic and acidic residues; it reads QQLEELKQQQKLDRQKEQERKRKLE. N6-acetyllysine is present on lysine 79. Lysine 91 participates in a covalent cross-link: Glycyl lysine isopeptide (Lys-Gly) (interchain with G-Cter in SUMO2). Phosphoserine is present on residues serine 95 and serine 101. Over residues 114–126 the composition is skewed to basic residues; sequence RKKAKAGKQNPKK. The CP-type G domain maps to 129-307; the sequence is CQELKKVIEA…IIDSPCLIIS (179 aa). Residue 176–179 participates in GTP binding; the sequence is NKSD. Glycyl lysine isopeptide (Lys-Gly) (interchain with G-Cter in SUMO2) cross-links involve residues lysine 177, lysine 248, lysine 262, and lysine 270. Residue 256-263 participates in GTP binding; that stretch reads GFPNVGKS. The tract at residues 277 to 451 is intermediate; sequence VGISMGLTRS…HLTNRILFRS (175 aa). 300-303 serves as a coordination point for GTP; sequence DSPC. Basic and acidic residues predominate over residues 460-475; sequence DEKDIVEESPRQTEDK. The interval 460–532 is acidic; sequence DEKDIVEESP…RASQEDETYD (73 aa). The tract at residues 460 to 538 is disordered; that stretch reads DEKDIVEESP…ETYDFTTDYI (79 aa). Serine 493, serine 505, and serine 518 each carry phosphoserine. The span at 506–518 shows a compositional bias: polar residues; the sequence is PEQSTAGKPSDGS.

The protein belongs to the TRAFAC class YlqF/YawG GTPase family. As to quaternary structure, interacts with MDM2; this interaction stabilizes MDM2. Interaction with MDM2 occurs in the nucleoplasm and is triggered by a nucleolar release mechanism, such as mitosis-induced nucleolar disassembly. Indirectly interacts with TP53, via MDM2-binding. Interacts with TSC22D1 isoform 2. Expressed in the adult bone marrow population that is enriched in hematopoietic stem cells.

It is found in the nucleus. The protein localises to the nucleolus. In terms of biological role, may be required to maintain the proliferative capacity of stem cells. Stabilizes MDM2 by preventing its ubiquitination, and hence proteasomal degradation. In Mus musculus (Mouse), this protein is Guanine nucleotide-binding protein-like 3 (Gnl3).